We begin with the raw amino-acid sequence, 168 residues long: Peptide deformylase 1 (168 aa).

Fe cation-binding residues include C92 and H134. E135 is a catalytic residue. Residue H138 participates in Fe cation binding.

It belongs to the polypeptide deformylase family. The cofactor is Fe(2+).

The catalysed reaction is N-terminal N-formyl-L-methionyl-[peptide] + H2O = N-terminal L-methionyl-[peptide] + formate. In terms of biological role, removes the formyl group from the N-terminal Met of newly synthesized proteins. Requires at least a dipeptide for an efficient rate of reaction. N-terminal L-methionine is a prerequisite for activity but the enzyme has broad specificity at other positions. This is Peptide deformylase 1 from Pseudomonas syringae pv. tomato (strain ATCC BAA-871 / DC3000).